Consider the following 597-residue polypeptide: DNA mismatch repair protein MutL (597 aa).

The protein belongs to the DNA mismatch repair MutL/HexB family.

Functionally, this protein is involved in the repair of mismatches in DNA. It is required for dam-dependent methyl-directed DNA mismatch repair. May act as a 'molecular matchmaker', a protein that promotes the formation of a stable complex between two or more DNA-binding proteins in an ATP-dependent manner without itself being part of a final effector complex. This chain is DNA mismatch repair protein MutL, found in Rhodopseudomonas palustris (strain BisB5).